Here is a 219-residue protein sequence, read N- to C-terminus: N-(5'-phosphoribosyl)anthranilate isomerase (219 aa).

The protein belongs to the TrpF family.

It catalyses the reaction N-(5-phospho-beta-D-ribosyl)anthranilate = 1-(2-carboxyphenylamino)-1-deoxy-D-ribulose 5-phosphate. It participates in amino-acid biosynthesis; L-tryptophan biosynthesis; L-tryptophan from chorismate: step 3/5. The chain is N-(5'-phosphoribosyl)anthranilate isomerase from Bradyrhizobium sp. (strain BTAi1 / ATCC BAA-1182).